The sequence spans 339 residues: Tetraacyldisaccharide 4'-kinase (339 aa).

Residue 62 to 69 participates in ATP binding; sequence VAGGTGKT.

This sequence belongs to the LpxK family.

It carries out the reaction a lipid A disaccharide + ATP = a lipid IVA + ADP + H(+). Its pathway is glycolipid biosynthesis; lipid IV(A) biosynthesis; lipid IV(A) from (3R)-3-hydroxytetradecanoyl-[acyl-carrier-protein] and UDP-N-acetyl-alpha-D-glucosamine: step 6/6. Functionally, transfers the gamma-phosphate of ATP to the 4'-position of a tetraacyldisaccharide 1-phosphate intermediate (termed DS-1-P) to form tetraacyldisaccharide 1,4'-bis-phosphate (lipid IVA). This is Tetraacyldisaccharide 4'-kinase from Xylella fastidiosa (strain 9a5c).